The sequence spans 311 residues: Olfactory receptor 2A5 (311 aa).

Residues 1–24 (MTKNQTWVTEFILLGFPLSLRIQM) are Extracellular-facing. Asn-4 is a glycosylation site (N-linked (GlcNAc...) asparagine). Residues 25-48 (LLSGLFSLLYVFTLLGNGAILGLI) form a helical membrane-spanning segment. Topologically, residues 49–56 (WLDSRLHT) are cytoplasmic. Residues 57-78 (PMYFFLSHLAIIDISYASNNVP) form a helical membrane-spanning segment. The Extracellular portion of the chain corresponds to 79–100 (KMLTNLGLNKRKTISFVPCTMQ). Residues Cys-97 and Cys-189 are joined by a disulfide bond. Residues 101–120 (TFLYMAFAHTECLILVMMSY) form a helical membrane-spanning segment. At 121–139 (DRYMAICHPLQYSVIMRWG) the chain is on the cytoplasmic side. Residues 140–158 (VCTVLAVTSWACGSLLALV) traverse the membrane as a helical segment. Topologically, residues 159 to 196 (HVVLILRLPFCGPHEINHFFCEILSVLKLACADTWLNQ) are extracellular. Residues 197–219 (VVIFAASVFILVGPLCLVLVSYS) form a helical membrane-spanning segment. Over 220–236 (RILAAILRIQSGEGRRK) the chain is Cytoplasmic. Residues 237-259 (AFSTCSSHLCMVGLFFGSAIVMY) traverse the membrane as a helical segment. The Extracellular portion of the chain corresponds to 260-272 (MAPKSRHPEEQQK). The chain crosses the membrane as a helical span at residues 273 to 292 (VLSLFYSLFNPMLNPLIYSL). The Cytoplasmic segment spans residues 293–311 (RNAEVKGALKRVLWKQRSK).

The protein belongs to the G-protein coupled receptor 1 family.

It is found in the cell membrane. In terms of biological role, odorant receptor. This is Olfactory receptor 2A5 (OR2A5) from Homo sapiens (Human).